Consider the following 372-residue polypeptide: THAP domain-containing protein 5 (372 aa).

The THAP-type zinc finger occupies M1 to F85. Residues T306 to N362 are a coiled coil.

Its subcellular location is the nucleus. This chain is THAP domain-containing protein 5 (thap5), found in Xenopus laevis (African clawed frog).